The following is a 279-amino-acid chain: Oxygen-dependent coproporphyrinogen-III oxidase (279 aa).

Ser-102 is a binding site for substrate. 2 residues coordinate a divalent metal cation: His-106 and His-116. His-116 acts as the Proton donor in catalysis. Asn-118–Arg-120 is a binding site for substrate. Residues His-149 and His-179 each contribute to the a divalent metal cation site. Residues Tyr-244 to Asn-279 are important for dimerization.

The protein belongs to the aerobic coproporphyrinogen-III oxidase family. Homodimer. The cofactor is a divalent metal cation.

It is found in the cytoplasm. The enzyme catalyses coproporphyrinogen III + O2 + 2 H(+) = protoporphyrinogen IX + 2 CO2 + 2 H2O. It participates in porphyrin-containing compound metabolism; protoporphyrin-IX biosynthesis; protoporphyrinogen-IX from coproporphyrinogen-III (O2 route): step 1/1. Its function is as follows. Involved in the heme biosynthesis. Catalyzes the aerobic oxidative decarboxylation of propionate groups of rings A and B of coproporphyrinogen-III to yield the vinyl groups in protoporphyrinogen-IX. The polypeptide is Oxygen-dependent coproporphyrinogen-III oxidase (Rickettsia africae (strain ESF-5)).